We begin with the raw amino-acid sequence, 379 residues long: Protein FAM53B (379 aa).

Disordered stretches follow at residues 206 to 257 (CPAE…HKQR) and 302 to 348 (AQND…AGKE). The segment covering 212-236 (SPESTPELQRRSGQSGLARSRSQPC) has biased composition (polar residues). The span at 239-249 (NHQKIGVKRRR) shows a compositional bias: basic residues. The short motif at 246 to 249 (KRRR) is the Nuclear localization signal element. Positions 326–342 (QSDSSSADALIHQSESS) are enriched in polar residues.

This sequence belongs to the FAM53 family. Interacts with ctnnb1. As to expression, mainly expressed in proliferating tissues.

It localises to the nucleus. In terms of biological role, acts as a regulator of Wnt signaling pathway by regulating beta-catenin (ctnnb1) nuclear localization. Required for appendage regeneration by regulating cell proliferation. This is Protein FAM53B from Danio rerio (Zebrafish).